Reading from the N-terminus, the 153-residue chain is Melatonin receptor type 1A X2.0 (153 aa).

Residues 1 to 12 are Cytoplasmic-facing; sequence HSSWYNRLFSNS. Residues 13–33 form a helical membrane-spanning segment; sequence GTICYVGLVWVLALGAILPNL. The Extracellular portion of the chain corresponds to 34-57; that stretch reads FVGSLRCDPRIFSCTFAQYVSSYY. A helical transmembrane segment spans residues 58–78; it reads TIAVVIFHFFLPIGVVSYCYL. At 79–112 the chain is on the cytoplasmic side; that stretch reads RIWVLVLNIRHRVKPDRHLHHQTWPYNIHGFITM. The helical transmembrane segment at 113-133 threads the bilayer; sequence FVVFVLFAVCWGPLNIIGLTV. Residues 134-145 are Extracellular-facing; that stretch reads AIYPPLGDSIPQ. Residues 146–153 form a helical membrane-spanning segment; sequence WLFVASYF.

Belongs to the G-protein coupled receptor 1 family.

Its subcellular location is the cell membrane. High affinity receptor for melatonin. The activity of this receptor is mediated by pertussis toxin sensitive G proteins that inhibits adenylate cyclase activity. In Xenopus laevis (African clawed frog), this protein is Melatonin receptor type 1A X2.0.